Consider the following 795-residue polypeptide: Mitochondrial intermediate peptidase (795 aa).

Residues 1–22 (MLKTLNRRSWTCRQCIRILRRN) constitute a mitochondrion transit peptide. Residue histidine 561 participates in Zn(2+) binding. The active site involves glutamate 562. Histidine 565 and histidine 568 together coordinate Zn(2+).

It belongs to the peptidase M3 family. Zn(2+) serves as cofactor.

Its subcellular location is the mitochondrion matrix. The catalysed reaction is Release of an N-terminal octapeptide as second stage of processing of some proteins imported into the mitochondrion.. In terms of biological role, cleaves proteins, imported into the mitochondrion, to their mature size. While most mitochondrial precursor proteins are processed to the mature form in one step by mitochondrial processing peptidase (MPP), the sequential cleavage by MIP of an octapeptide after initial processing by MPP is a required step for a subgroup of nuclear-encoded precursor proteins destined for the matrix or the inner membrane. In Coccidioides immitis (strain RS) (Valley fever fungus), this protein is Mitochondrial intermediate peptidase (OCT1).